The sequence spans 202 residues: ATP-dependent Clp protease proteolytic subunit 3 (202 aa).

The Nucleophile role is filled by Ser-93. His-118 is a catalytic residue.

It belongs to the peptidase S14 family. In terms of assembly, fourteen ClpP subunits assemble into 2 heptameric rings which stack back to back to give a disk-like structure with a central cavity, resembling the structure of eukaryotic proteasomes.

It localises to the cytoplasm. The enzyme catalyses Hydrolysis of proteins to small peptides in the presence of ATP and magnesium. alpha-casein is the usual test substrate. In the absence of ATP, only oligopeptides shorter than five residues are hydrolyzed (such as succinyl-Leu-Tyr-|-NHMec, and Leu-Tyr-Leu-|-Tyr-Trp, in which cleavage of the -Tyr-|-Leu- and -Tyr-|-Trp bonds also occurs).. Its function is as follows. Cleaves peptides in various proteins in a process that requires ATP hydrolysis. Has a chymotrypsin-like activity. Plays a major role in the degradation of misfolded proteins. The chain is ATP-dependent Clp protease proteolytic subunit 3 from Rhodococcus jostii (strain RHA1).